The primary structure comprises 485 residues: Katanin p60 ATPase-containing subunit A1 (485 aa).

Residues 101–173 (HRSSPCVVRK…KNKAEAVETE (73 aa)) are disordered. The span at 141–173 (NGDKGKPQKSKEKKENPSKPKEDKNKAEAVETE) shows a compositional bias: basic and acidic residues. 244 to 251 (GPPGTGKT) is a binding site for ATP.

Belongs to the AAA ATPase family. Katanin p60 subunit A1 subfamily. As to quaternary structure, can homooligomerize into hexameric rings, which may be promoted by interaction with microtubules. Interacts with katnb1, which may serve as a targeting subunit.

It localises to the cytoplasm. The protein resides in the cytoskeleton. Its subcellular location is the microtubule organizing center. The protein localises to the centrosome. It is found in the spindle pole. It localises to the spindle. The catalysed reaction is n ATP + n H2O + a microtubule = n ADP + n phosphate + (n+1) alpha/beta tubulin heterodimers.. ATPase activity is stimulated by microtubules, which promote homooligomerization. ATP-dependent microtubule severing is stimulated by interaction with katnb1. Catalytic subunit of a complex which severs microtubules in an ATP-dependent manner. Microtubule severing may promote rapid reorganization of cellular microtubule arrays and the release of microtubules from the centrosome following nucleation. The polypeptide is Katanin p60 ATPase-containing subunit A1 (katna1) (Danio rerio (Zebrafish)).